Here is a 753-residue protein sequence, read N- to C-terminus: LIM domain and actin-binding protein 1 (753 aa).

Methionine 1 carries the post-translational modification N-acetylmethionine. The residue at position 15 (serine 15) is a Phosphoserine. The span at 46–56 (EEANMERKKNN) shows a compositional bias: basic and acidic residues. Disordered regions lie at residues 46–66 (EEAN…HFRR) and 82–186 (GAEF…TSGK). Phosphoserine is present on serine 132. Residues 143 to 152 (PRSENSHDFK) are compositionally biased toward basic and acidic residues. The Required for interaction with NPC1L1 signature appears at 164-166 (CLG). Over residues 167 to 177 (DSRHEAEKPET) the composition is skewed to basic and acidic residues. Serine 225, serine 230, serine 242, and serine 263 each carry phosphoserine. Disordered regions lie at residues 276-326 (AAVS…VSTT) and 341-379 (TCNS…TAKK). Residues 278–291 (VSKQSSPASYTNEL) are compositionally biased toward polar residues. Over residues 292–305 (KTSESKTHKWEQKE) the composition is skewed to basic and acidic residues. Polar residues predominate over residues 342-351 (CNSQVKSEAQ). Residues serine 348, serine 360, serine 367, and serine 372 each carry the phosphoserine modification. Residues 363–375 (ARTSSLPESSPSK) are compositionally biased toward polar residues. One can recognise an LIM zinc-binding domain in the interval 386–446 (ESCVECQKTV…KPHFNQLFKS (61 aa)). Lysine 437 is modified (N6-succinyllysine). Residues serine 467, serine 485, and serine 488 each carry the phosphoserine modification. Disordered regions lie at residues 467–493 (SDNE…GVED), 505–669 (SMEA…FELE), and 682–703 (EDDN…GWSG). A required for interaction with MYO5B region spans residues 491-511 (VEDAPIAKVGVLAASMEAKAS). Composition is skewed to basic and acidic residues over residues 512 to 525 (SQRE…ETKK) and 554 to 565 (WPPEDDVCKTEA). The segment covering 598–609 (SSIKSPKASSPS) has biased composition (low complexity). Residues serine 599, serine 602, serine 607, and serine 615 each carry the phosphoserine modification. Over residues 630-666 (MERKQTENARPSGEKENVGKSRWQGEEVPRSKDRSSF) the composition is skewed to basic and acidic residues. Residues serine 692, serine 720, and serine 735 each carry the phosphoserine modification.

Interacts with NPC1L1; bridges NPC1L1 with MYO5B. Interacts with MYO5B; bridges MYO5B with NPC1L1. Interacts with PXN; this complex stabilizes actin dynamics. Binds to G-actin and F-actin. Interacts with LUZP1 (via C-terminus); both proteins restrict ciliation and may work together to regulate this process. Binds RAB40B (GTP-bound); interaction influences LIMA1 subcellular localization in lamellipodia during cell migration. In terms of processing, phosphorylation of the C-terminal region by MAPK1/MAPK3 reduces its association with F-actin and contributes to actin filament reorganization and enhances cell motility. Post-translationally, ubiquitinated by the ECS(RAB40B) complex leading to its degradation. Highly expressed in the small intestine, including the duodenum, jejunum, and ileum. Low expression in the liver and very low expressed in the heart, spleen, lung, brain, and pancreas. Isoform Alpha is highly expressed in embryos from day 7-11 and in adult spleen and lung. Isoform Beta expression is highest in adult kidney, testis, lung and liver, intermediate in heart, brain, spleen, skeletal muscle and low in embryos.

It localises to the cytoplasm. It is found in the cell junction. Its subcellular location is the focal adhesion. The protein localises to the cytoskeleton. The protein resides in the stress fiber. It localises to the cell membrane. It is found in the cell projection. Its subcellular location is the ruffle. The protein localises to the lamellipodium. In terms of biological role, actin-binding protein involved in actin cytoskeleton regulation and dynamics. Increases the number and size of actin stress fibers and inhibits membrane ruffling. Inhibits actin filament depolymerization. Bundles actin filaments, delays filament nucleation and reduces formation of branched filaments. Acts as a negative regulator of primary cilium formation. Plays a role in cholesterol homeostasis. Influences plasma cholesterol levels through regulation of intestinal cholesterol absorption. May act as a scaffold protein by regulating NPC1L1 transportation, an essential protein for cholesterol absorption, to the plasma membrane by recruiting MYO5B to NPC1L1, and thus facilitates cholesterol uptake. This Mus musculus (Mouse) protein is LIM domain and actin-binding protein 1 (Lima1).